The primary structure comprises 1079 residues: Translation initiation factor IF-2 (1079 aa).

Composition is skewed to basic and acidic residues over residues Val52–Asn65, Arg75–Glu90, and Ala102–Gln134. The interval Val52 to Ala488 is disordered. Over residues Ala150–Thr184 the composition is skewed to low complexity. Positions Val185–Ala194 are enriched in basic and acidic residues. Low complexity predominate over residues Ala276 to Gln291. Residues Gly306 to Gly327 are compositionally biased toward basic and acidic residues. 2 stretches are compositionally biased toward low complexity: residues Glu348–Pro370 and Pro380–Pro398. The segment covering Pro419–Gly429 has biased composition (gly residues). Residues Pro461–Arg471 are compositionally biased toward basic and acidic residues. The span at Pro473 to Lys482 shows a compositional bias: basic residues. Positions Thr578 to Glu745 constitute a tr-type G domain. Residues Gly587 to Thr594 form a G1 region. GTP is bound at residue Gly587–Thr594. The interval Gly612 to His616 is G2. The tract at residues Asp633–Gly636 is G3. GTP is bound by residues Asp633–His637 and Asn687–Asp690. The G4 stretch occupies residues Asn687–Asp690. The tract at residues Ser723–Lys725 is G5.

The protein belongs to the TRAFAC class translation factor GTPase superfamily. Classic translation factor GTPase family. IF-2 subfamily.

Its subcellular location is the cytoplasm. In terms of biological role, one of the essential components for the initiation of protein synthesis. Protects formylmethionyl-tRNA from spontaneous hydrolysis and promotes its binding to the 30S ribosomal subunits. Also involved in the hydrolysis of GTP during the formation of the 70S ribosomal complex. This is Translation initiation factor IF-2 from Nitratidesulfovibrio vulgaris (strain ATCC 29579 / DSM 644 / CCUG 34227 / NCIMB 8303 / VKM B-1760 / Hildenborough) (Desulfovibrio vulgaris).